The chain runs to 276 residues: Urease accessory protein UreD (276 aa).

It belongs to the UreD family. As to quaternary structure, ureD, UreF and UreG form a complex that acts as a GTP-hydrolysis-dependent molecular chaperone, activating the urease apoprotein by helping to assemble the nickel containing metallocenter of UreC. The UreE protein probably delivers the nickel.

Its subcellular location is the cytoplasm. In terms of biological role, required for maturation of urease via the functional incorporation of the urease nickel metallocenter. This is Urease accessory protein UreD from Verminephrobacter eiseniae (strain EF01-2).